Reading from the N-terminus, the 213-residue chain is 3-isopropylmalate dehydratase small subunit (213 aa).

The protein belongs to the LeuD family. LeuD type 1 subfamily. As to quaternary structure, heterodimer of LeuC and LeuD.

The catalysed reaction is (2R,3S)-3-isopropylmalate = (2S)-2-isopropylmalate. Its pathway is amino-acid biosynthesis; L-leucine biosynthesis; L-leucine from 3-methyl-2-oxobutanoate: step 2/4. In terms of biological role, catalyzes the isomerization between 2-isopropylmalate and 3-isopropylmalate, via the formation of 2-isopropylmaleate. This Magnetococcus marinus (strain ATCC BAA-1437 / JCM 17883 / MC-1) protein is 3-isopropylmalate dehydratase small subunit.